We begin with the raw amino-acid sequence, 283 residues long: MKGIARLVTSLSRIGGRKVVSGTSTVTSSSSSSLLLSRRSLFISATNLLNSRTKDSALPSLNSSLLAQKWNFLGGQRRTMFIQTQSTPNPSSLMFYPGKPVMEVGSADFPNVRSALGSPLAKSIYSIDGVVRVFFGSDFVTVTKSDDVSWDILKPEIFAAVMDFYSSGQPLFLDSQAAAAKDTAISEDDSETVAMIKELLETRIRPAVQDDGGDIEYCGFDPESGIVKLRMQGACSGCPSSSVTLKSGIENMLMHYVSEVKGVEQEFDGEDEEGTLSGEMRVE.

The transit peptide at 1-48 (MKGIARLVTSLSRIGGRKVVSGTSTVTSSSSSSLLLSRRSLFISATNL) directs the protein to the mitochondrion.

The protein belongs to the NifU family. As to expression, predominantly expressed in roots.

The protein resides in the mitochondrion. Molecular scaffold for [Fe-S] cluster assembly of mitochondrial iron-sulfur proteins. This chain is NifU-like protein 4, mitochondrial (NIFU4), found in Arabidopsis thaliana (Mouse-ear cress).